The chain runs to 339 residues: Purple acid phosphatase 4 (339 aa).

The signal sequence occupies residues 1 to 31; that stretch reads MSSKFDIGSLSIVMTLLICFLLLSLAPKLEA. A Fe cation-binding site is contributed by Asp53. N-linked (GlcNAc...) asparagine glycosylation occurs at Asn61. 2 residues coordinate Fe cation: Asp86 and Tyr89. Asp86 contributes to the Zn(2+) binding site. Asn124 and His218 together coordinate Zn(2+). His227 functions as the Proton donor in the catalytic mechanism. His253 contacts Zn(2+). 253-255 provides a ligand contact to substrate; the sequence is HDH. His255 is a Fe cation binding site. N-linked (GlcNAc...) asparagine glycosylation occurs at Asn284.

The protein belongs to the metallophosphoesterase superfamily. Purple acid phosphatase family. As to quaternary structure, homodimer. The cofactor is Fe cation. Requires Zn(2+) as cofactor. In terms of tissue distribution, expressed in roots, stems, leaves, flowers and siliques.

The protein resides in the secreted. The catalysed reaction is a phosphate monoester + H2O = an alcohol + phosphate. This Arabidopsis thaliana (Mouse-ear cress) protein is Purple acid phosphatase 4 (PAP4).